The following is a 576-amino-acid chain: Adenine deaminase (576 aa).

This sequence belongs to the metallo-dependent hydrolases superfamily. Adenine deaminase family. Mn(2+) is required as a cofactor.

It carries out the reaction adenine + H2O + H(+) = hypoxanthine + NH4(+). The chain is Adenine deaminase from Bacillus pumilus (strain SAFR-032).